The chain runs to 110 residues: Phosphoribosyl-ATP pyrophosphatase (110 aa).

The protein belongs to the PRA-PH family.

The protein localises to the cytoplasm. It catalyses the reaction 1-(5-phospho-beta-D-ribosyl)-ATP + H2O = 1-(5-phospho-beta-D-ribosyl)-5'-AMP + diphosphate + H(+). The protein operates within amino-acid biosynthesis; L-histidine biosynthesis; L-histidine from 5-phospho-alpha-D-ribose 1-diphosphate: step 2/9. This Hahella chejuensis (strain KCTC 2396) protein is Phosphoribosyl-ATP pyrophosphatase.